The sequence spans 532 residues: Putative L-lactate permease (532 aa).

A run of 14 helical transmembrane segments spans residues 23–43, 56–76, 101–121, 129–149, 152–172, 180–200, 213–233, 234–254, 274–294, 346–366, 387–407, 420–440, 462–482, and 508–528; these read ALPSYVALPWVATLVMGVHLL, VVSAIIAVQTPITVIFGAILF, VAQLMIIGWAFAFMIEGASGF, APILVGLGFHPLKVAMLALIM, VPVSFGAVGTPTWFGFGALKL, IGSITAFIHSIAALIIPLLAL, IVFIYISVLGCVVPYFLIAQV, NYEFPSLVGGAIGLFISVWAA, AGEVVKALFPTGLLIAFLIVT, LLYVPALIPFVITVLIAIPFF, PFIALIGALVMVNLMLVGGEH, ISGSNWTIFSSFLGAIGSFFS, GISVALVLALQSVGGAMGNMV, and IIPMIIYGIIAALGALFLVPL.

Belongs to the lactate permease family.

It is found in the cell inner membrane. In terms of biological role, may play a role in L-lactate transport. This Haemophilus influenzae (strain ATCC 51907 / DSM 11121 / KW20 / Rd) protein is Putative L-lactate permease.